The chain runs to 126 residues: Methylglyoxal synthase (126 aa).

The region spanning 1 to 126 is the MGS-like domain; it reads MADRKCLALI…AEQLIDFRRN (126 aa). Residues H12, K16, 38–41, and 59–60 contribute to the substrate site; these read TGTT and SG. D65 acts as the Proton donor/acceptor in catalysis. H92 is a substrate binding site.

The protein belongs to the methylglyoxal synthase family.

The catalysed reaction is dihydroxyacetone phosphate = methylglyoxal + phosphate. Functionally, catalyzes the formation of methylglyoxal from dihydroxyacetone phosphate. The sequence is that of Methylglyoxal synthase from Rhizobium meliloti (strain 1021) (Ensifer meliloti).